Consider the following 186-residue polypeptide: MDMESILLDAEERMEKAIAALEREFSRLRTGRASASLVDGIKVDYYGTPTPISQVASVAVPDSRCITIQPWDRNAFSLIEKAILKSDLGLNPVNDGKIIRINIPPLTEERRKDLGKMARKYAEEAKVAVRNVRRDANEQLKKLEKNKELSEDDLRKAQEDVQKLTDRFVAKTDEKAGAKEKEIMDI.

The protein belongs to the RRF family.

The protein localises to the cytoplasm. In terms of biological role, responsible for the release of ribosomes from messenger RNA at the termination of protein biosynthesis. May increase the efficiency of translation by recycling ribosomes from one round of translation to another. The protein is Ribosome-recycling factor of Nitratidesulfovibrio vulgaris (strain DP4) (Desulfovibrio vulgaris).